The chain runs to 120 residues: U-scoloptoxin(20)-Cw1a (120 aa).

Residues 1–26 form the signal peptide; the sequence is MNSTDRLLGVLLAVVALILLIRISEA. The tract at residues 87–106 is disordered; the sequence is SSGKSLTTTKDSSESRKKEI. Residues 97–106 are compositionally biased toward basic and acidic residues; it reads DSSESRKKEI.

This sequence belongs to the scoloptoxin-20 family. Contains 3 disulfide bonds. As to expression, expressed by the venom gland.

The protein localises to the secreted. The polypeptide is U-scoloptoxin(20)-Cw1a (Cormocephalus westwoodi (Westwood's green centipede)).